The chain runs to 223 residues: UPF0502 protein Sbal223_2520 (223 aa).

It belongs to the UPF0502 family.

The sequence is that of UPF0502 protein Sbal223_2520 from Shewanella baltica (strain OS223).